The primary structure comprises 616 residues: Probable methyltransferase PMT2 (616 aa).

The Cytoplasmic segment spans residues 1 to 13 (MALKSSSADGKTR). The chain crosses the membrane as a helical; Signal-anchor for type II membrane protein span at residues 14–34 (SSVQIFIVFSLCCFFYILGAW). Over 35-616 (QRSGFGKGDS…YWVTNSTSTH (582 aa)) the chain is Lumenal. N-linked (GlcNAc...) asparagine glycosylation is found at N205 and N611.

It belongs to the methyltransferase superfamily.

The protein localises to the golgi apparatus membrane. The polypeptide is Probable methyltransferase PMT2 (Arabidopsis thaliana (Mouse-ear cress)).